Here is a 327-residue protein sequence, read N- to C-terminus: Aromatase (327 aa).

Cys-315 is a heme binding site.

This sequence belongs to the cytochrome P450 family. Heme is required as a cofactor.

Its subcellular location is the membrane. The enzyme catalyses testosterone + 3 reduced [NADPH--hemoprotein reductase] + 3 O2 = 17beta-estradiol + formate + 3 oxidized [NADPH--hemoprotein reductase] + 4 H2O + 4 H(+). It catalyses the reaction androst-4-ene-3,17-dione + 3 reduced [NADPH--hemoprotein reductase] + 3 O2 = estrone + formate + 3 oxidized [NADPH--hemoprotein reductase] + 4 H2O + 4 H(+). In terms of biological role, catalyzes the formation of aromatic C18 estrogens from C19 androgens. This chain is Aromatase (CYP19A1), found in Coturnix japonica (Japanese quail).